Here is a 206-residue protein sequence, read N- to C-terminus: MKIILATSNKDKVKEIKAFYKNYEIYALNEIMQPFEIKETGSSFKENALIKVNAVYKKLEEMKLENEFMALSDDSGICVDILGGAPGIYSARYSNDMVIHPTDESNRAKLISKLHKKNVKTSPAHYTACIALSCKSGNFTTHGFMHGRVIDEERGNNGFGYDFMFIANGFSKTIGELDENTKLKISHRSKGLFLMSKILKILNRSF.

7–12 (TSNKDK) lines the substrate pocket. The active-site Proton acceptor is aspartate 74. Aspartate 74 is a binding site for Mg(2+). Substrate contacts are provided by residues serine 75, 159–162 (FGYD), lysine 182, and 187–188 (HR).

It belongs to the HAM1 NTPase family. As to quaternary structure, homodimer. Mg(2+) is required as a cofactor.

The enzyme catalyses XTP + H2O = XMP + diphosphate + H(+). It catalyses the reaction dITP + H2O = dIMP + diphosphate + H(+). It carries out the reaction ITP + H2O = IMP + diphosphate + H(+). Functionally, pyrophosphatase that catalyzes the hydrolysis of nucleoside triphosphates to their monophosphate derivatives, with a high preference for the non-canonical purine nucleotides XTP (xanthosine triphosphate), dITP (deoxyinosine triphosphate) and ITP. Seems to function as a house-cleaning enzyme that removes non-canonical purine nucleotides from the nucleotide pool, thus preventing their incorporation into DNA/RNA and avoiding chromosomal lesions. This chain is dITP/XTP pyrophosphatase, found in Campylobacter hominis (strain ATCC BAA-381 / DSM 21671 / CCUG 45161 / LMG 19568 / NCTC 13146 / CH001A).